Reading from the N-terminus, the 222-residue chain is Large ribosomal subunit protein uL4 (222 aa).

Residues 50 to 72 (TRGRSEVSHSTKKPFRQKGTGNA) are disordered.

It belongs to the universal ribosomal protein uL4 family. As to quaternary structure, part of the 50S ribosomal subunit.

Its function is as follows. One of the primary rRNA binding proteins, this protein initially binds near the 5'-end of the 23S rRNA. It is important during the early stages of 50S assembly. It makes multiple contacts with different domains of the 23S rRNA in the assembled 50S subunit and ribosome. In terms of biological role, forms part of the polypeptide exit tunnel. The chain is Large ribosomal subunit protein uL4 from Chlamydia trachomatis serovar A (strain ATCC VR-571B / DSM 19440 / HAR-13).